We begin with the raw amino-acid sequence, 466 residues long: Sucrose-6-phosphate hydrolase (466 aa).

Residues 38–41 (LLND), glutamine 57, 100–101 (YS), 159–160 (RD), and glutamate 218 contribute to the substrate site. Aspartate 41 is a catalytic residue.

It localises to the cytoplasm. It catalyses the reaction Hydrolysis of terminal non-reducing beta-D-fructofuranoside residues in beta-D-fructofuranosides.. Its pathway is glycan biosynthesis; sucrose metabolism. Its function is as follows. Hydrolyzes sucrose and sucrose-6P, but fails to hydrolyze any of the phosphorylated isomers of sucrose and other phospho-D-glucosides, including maltose-6'P and trehalose-6P. The chain is Sucrose-6-phosphate hydrolase (scrB) from Klebsiella pneumoniae.